A 555-amino-acid chain; its full sequence is Urocanate hydratase (555 aa).

NAD(+) contacts are provided by residues 51-52, Gln129, 175-177, Glu195, 262-266, 272-273, and Tyr321; these read GG, GMG, QTSAH, and YL. Residue Cys409 is part of the active site. Gly491 is an NAD(+) binding site.

The protein belongs to the urocanase family. NAD(+) serves as cofactor.

It is found in the cytoplasm. It catalyses the reaction 4-imidazolone-5-propanoate = trans-urocanate + H2O. The protein operates within amino-acid degradation; L-histidine degradation into L-glutamate; N-formimidoyl-L-glutamate from L-histidine: step 2/3. Functionally, catalyzes the conversion of urocanate to 4-imidazolone-5-propionate. The chain is Urocanate hydratase from Xanthomonas axonopodis pv. citri (strain 306).